A 193-amino-acid polypeptide reads, in one-letter code: MELDVFAGQEKSELSMIEVARAILETRGRDKEMYFNDLVNEIQNYLEKSDADIRSSLPFFYSDLNTDGSFIPLGDNKWGLRSWYAIDEIDEEVITLEDIDENAPKRKNKKVNAFMDGDEDAIDYNDDDPEDENFTPSSAILEYDNDNEDDENAEVESYDSELNEIIPDDDLDDVELSEEDDDDDDDYEDETND.

The HTH HARE-type domain occupies 14–83 (LSMIEVARAI…GDNKWGLRSW (70 aa)). Composition is skewed to acidic residues over residues 119–133 (EDAIDYNDDDPEDEN) and 143–193 (YDND…ETND). The interval 119-193 (EDAIDYNDDD…DDDYEDETND (75 aa)) is disordered.

The protein belongs to the RpoE family. As to quaternary structure, RNAP is composed of a core of 2 alpha, a beta and a beta' subunits. The core is associated with a delta subunit and one of several sigma factors.

In terms of biological role, participates in both the initiation and recycling phases of transcription. In the presence of the delta subunit, RNAP displays an increased specificity of transcription, a decreased affinity for nucleic acids, and an increased efficiency of RNA synthesis because of enhanced recycling. In Streptococcus thermophilus (strain CNRZ 1066), this protein is Probable DNA-directed RNA polymerase subunit delta.